Reading from the N-terminus, the 557-residue chain is NADP-dependent malic enzyme (557 aa).

Y91 serves as the catalytic Proton donor. R144 is a binding site for NADP(+). Residue K162 is the Proton acceptor of the active site. E234, D235, and D258 together coordinate a divalent metal cation. NADP(+) is bound by residues D258, 290–307, and N397; that span reads GAGE…MAME.

It belongs to the malic enzymes family. In terms of assembly, homotetramer. Mg(2+) is required as a cofactor. The cofactor is Mn(2+).

Its subcellular location is the cytoplasm. The catalysed reaction is (S)-malate + NADP(+) = pyruvate + CO2 + NADPH. It carries out the reaction oxaloacetate + H(+) = pyruvate + CO2. This is NADP-dependent malic enzyme (ME1) from Anas platyrhynchos (Mallard).